The sequence spans 156 residues: Small ribosomal subunit protein uS7 (156 aa).

Belongs to the universal ribosomal protein uS7 family. In terms of assembly, part of the 30S ribosomal subunit. Contacts proteins S9 and S11.

One of the primary rRNA binding proteins, it binds directly to 16S rRNA where it nucleates assembly of the head domain of the 30S subunit. Is located at the subunit interface close to the decoding center, probably blocks exit of the E-site tRNA. In Brevibacillus brevis (strain 47 / JCM 6285 / NBRC 100599), this protein is Small ribosomal subunit protein uS7.